The sequence spans 375 residues: Queuine tRNA-ribosyltransferase (375 aa).

Residue aspartate 89 is the Proton acceptor of the active site. Substrate contacts are provided by residues 89–93, aspartate 143, glutamine 187, and glycine 214; that span reads DSGGF. The RNA binding stretch occupies residues 245–251; that stretch reads GVGKPED. The Nucleophile role is filled by aspartate 264. Residues 269-273 form an RNA binding; important for wobble base 34 recognition region; sequence TRNAR. Residues cysteine 302, cysteine 304, cysteine 307, and histidine 333 each contribute to the Zn(2+) site.

Belongs to the queuine tRNA-ribosyltransferase family. As to quaternary structure, homodimer. Within each dimer, one monomer is responsible for RNA recognition and catalysis, while the other monomer binds to the replacement base PreQ1. The cofactor is Zn(2+).

The catalysed reaction is 7-aminomethyl-7-carbaguanine + guanosine(34) in tRNA = 7-aminomethyl-7-carbaguanosine(34) in tRNA + guanine. The protein operates within tRNA modification; tRNA-queuosine biosynthesis. Functionally, catalyzes the base-exchange of a guanine (G) residue with the queuine precursor 7-aminomethyl-7-deazaguanine (PreQ1) at position 34 (anticodon wobble position) in tRNAs with GU(N) anticodons (tRNA-Asp, -Asn, -His and -Tyr). Catalysis occurs through a double-displacement mechanism. The nucleophile active site attacks the C1' of nucleotide 34 to detach the guanine base from the RNA, forming a covalent enzyme-RNA intermediate. The proton acceptor active site deprotonates the incoming PreQ1, allowing a nucleophilic attack on the C1' of the ribose to form the product. After dissociation, two additional enzymatic reactions on the tRNA convert PreQ1 to queuine (Q), resulting in the hypermodified nucleoside queuosine (7-(((4,5-cis-dihydroxy-2-cyclopenten-1-yl)amino)methyl)-7-deazaguanosine). The protein is Queuine tRNA-ribosyltransferase of Salmonella typhi.